The primary structure comprises 336 residues: dTDP-glucose 4,6-dehydratase (336 aa).

NAD(+) contacts are provided by residues 7–13, 37–40, and 63–64; these read GGAGFIG, DKLT, and DI. Position 87 (T87) interacts with substrate. T102 is a binding site for NAD(+). 127–129 is a binding site for substrate; it reads TDE. D128 serves as the catalytic Proton donor. Catalysis depends on proton acceptor residues E129 and Y151. 151–155 is a binding site for NAD(+); that stretch reads YAAAK. N180 lines the substrate pocket. Position 181 (N181) interacts with NAD(+). Substrate is bound by residues 190–191, 206–208, R215, N250, and 274–277; these read KL, PVY, and RPGH.

This sequence belongs to the NAD(P)-dependent epimerase/dehydratase family. dTDP-glucose dehydratase subfamily. As to quaternary structure, homodimer. NAD(+) is required as a cofactor.

It carries out the reaction dTDP-alpha-D-glucose = dTDP-4-dehydro-6-deoxy-alpha-D-glucose + H2O. Its pathway is antibiotic biosynthesis; novobiocin biosynthesis. Its function is as follows. dTDP-glucose 4,6-dehydratase involved in the generation of the deoxysugar in the novobiocin biosynthesis pathway, an aminocoumarin family antibiotic that targets bacterial DNA gyrases. In Streptomyces niveus (Streptomyces spheroides), this protein is dTDP-glucose 4,6-dehydratase (novT).